The primary structure comprises 475 residues: Ribulose bisphosphate carboxylase large chain (475 aa).

Substrate contacts are provided by Asn123 and Thr173. Lys175 serves as the catalytic Proton acceptor. A substrate-binding site is contributed by Lys177. 3 residues coordinate Mg(2+): Lys201, Asp203, and Glu204. An N6-carboxylysine modification is found at Lys201. His294 serves as the catalytic Proton acceptor. Substrate contacts are provided by Arg295, His327, and Ser379.

Belongs to the RuBisCO large chain family. Type I subfamily. In terms of assembly, heterohexadecamer of 8 large chains and 8 small chains. The cofactor is Mg(2+).

It localises to the plastid. Its subcellular location is the chloroplast. It carries out the reaction 2 (2R)-3-phosphoglycerate + 2 H(+) = D-ribulose 1,5-bisphosphate + CO2 + H2O. The enzyme catalyses D-ribulose 1,5-bisphosphate + O2 = 2-phosphoglycolate + (2R)-3-phosphoglycerate + 2 H(+). Its function is as follows. RuBisCO catalyzes two reactions: the carboxylation of D-ribulose 1,5-bisphosphate, the primary event in carbon dioxide fixation, as well as the oxidative fragmentation of the pentose substrate in the photorespiration process. Both reactions occur simultaneously and in competition at the same active site. This is Ribulose bisphosphate carboxylase large chain from Bigelowiella natans (Pedinomonas minutissima).